Consider the following 299-residue polypeptide: Sulfate adenylyltransferase subunit 2 (299 aa).

This sequence belongs to the PAPS reductase family. CysD subfamily. Sulfate-activating enzymes, NodP and NodQ, may be physically associated.

It catalyses the reaction sulfate + ATP + H(+) = adenosine 5'-phosphosulfate + diphosphate. In terms of biological role, proposed to provide activated sulfate for transfer to nod factor. This Rhizobium meliloti (strain 1021) (Ensifer meliloti) protein is Sulfate adenylyltransferase subunit 2 (nodP).